A 406-amino-acid polypeptide reads, in one-letter code: S-adenosylmethionine synthase (406 aa).

His17 contacts ATP. Asp19 contacts Mg(2+). Position 45 (Glu45) interacts with K(+). Glu58 and Gln101 together coordinate L-methionine. The flexible loop stretch occupies residues 101–111 (QSAEINQGVAR). Residues 178–180 (DGK), Asp258, 264–265 (RK), Ala281, and Lys285 each bind ATP. Residue Asp258 coordinates L-methionine. Lys289 lines the L-methionine pocket.

It belongs to the AdoMet synthase family. In terms of assembly, homotetramer; dimer of dimers. The cofactor is Mg(2+). K(+) is required as a cofactor.

The protein localises to the cytoplasm. It catalyses the reaction L-methionine + ATP + H2O = S-adenosyl-L-methionine + phosphate + diphosphate. It functions in the pathway amino-acid biosynthesis; S-adenosyl-L-methionine biosynthesis; S-adenosyl-L-methionine from L-methionine: step 1/1. Catalyzes the formation of S-adenosylmethionine (AdoMet) from methionine and ATP. The overall synthetic reaction is composed of two sequential steps, AdoMet formation and the subsequent tripolyphosphate hydrolysis which occurs prior to release of AdoMet from the enzyme. In Bifidobacterium longum (strain NCC 2705), this protein is S-adenosylmethionine synthase.